A 261-amino-acid polypeptide reads, in one-letter code: Intermembrane phospholipid transport system permease protein MlaE (261 aa).

The Cytoplasmic segment spans residues 1–12; the sequence is MIVNFISALGKQ. The helical transmembrane segment at 13 to 33 threads the bilayer; that stretch reads VIDFFRALGRAGFMLFGALIG. Residues 34-49 lie on the Periplasmic side of the membrane; sequence KPQIRKHFPLLVKQMH. The chain crosses the membrane as a helical span at residues 50–70; the sequence is VLGVQSLLIILLSGLFIGMVL. At 71–147 the chain is on the cytoplasmic side; the sequence is GLQGYVVLID…DPLRRVIAPR (77 aa). A helical membrane pass occupies residues 148 to 168; the sequence is FWAGVISMPVLSILFIAIGIW. The Periplasmic portion of the chain corresponds to 169–198; it reads GGSLVGVDWKGVDSGSFWSVMQNSVSWSYD. The helical transmembrane segment at 199–219 threads the bilayer; the sequence is ILNGFIKAVFFAVAVTWIALF. Residues 220–238 lie on the Cytoplasmic side of the membrane; that stretch reads NGYDCMPTSEGISQATTRT. A helical transmembrane segment spans residues 239–259; the sequence is VVHASLVVLGLDFILTAIMFG. The Periplasmic portion of the chain corresponds to 260–261; it reads AG.

Belongs to the MlaE permease family. As to quaternary structure, the complex is composed of two ATP-binding proteins (MlaF), two transmembrane proteins (MlaE), two cytoplasmic solute-binding proteins (MlaB) and six periplasmic solute-binding proteins (MlaD).

It localises to the cell inner membrane. In terms of biological role, part of the ABC transporter complex MlaFEDB, which is involved in a phospholipid transport pathway that maintains lipid asymmetry in the outer membrane by retrograde trafficking of phospholipids from the outer membrane to the inner membrane. Probably responsible for the translocation of the substrate across the membrane. The sequence is that of Intermembrane phospholipid transport system permease protein MlaE from Haemophilus influenzae (strain ATCC 51907 / DSM 11121 / KW20 / Rd).